We begin with the raw amino-acid sequence, 567 residues long: UPF0313 protein Tpet_0582 (567 aa).

One can recognise a Radical SAM core domain in the interval 288–560 (KAIETVKFSI…NKMKENVLFK (273 aa)). Cysteine 303, cysteine 307, and cysteine 310 together coordinate [4Fe-4S] cluster.

Belongs to the UPF0313 family. [4Fe-4S] cluster is required as a cofactor.

The polypeptide is UPF0313 protein Tpet_0582 (Thermotoga petrophila (strain ATCC BAA-488 / DSM 13995 / JCM 10881 / RKU-1)).